Reading from the N-terminus, the 126-residue chain is Holo-[acyl-carrier-protein] synthase (126 aa).

Asp-9 and Glu-58 together coordinate Mg(2+).

It belongs to the P-Pant transferase superfamily. AcpS family. Requires Mg(2+) as cofactor.

It localises to the cytoplasm. It carries out the reaction apo-[ACP] + CoA = holo-[ACP] + adenosine 3',5'-bisphosphate + H(+). In terms of biological role, transfers the 4'-phosphopantetheine moiety from coenzyme A to a Ser of acyl-carrier-protein. The sequence is that of Holo-[acyl-carrier-protein] synthase from Salmonella choleraesuis (strain SC-B67).